The primary structure comprises 58 residues: uncharacterized protein (58 aa).

It localises to the mitochondrion. This is an uncharacterized protein from Saccharomyces cerevisiae (strain ATCC 204508 / S288c) (Baker's yeast).